Here is a 202-residue protein sequence, read N- to C-terminus: Small ribosomal subunit protein uS4c (202 aa).

The 62-residue stretch at methionine 90–lysine 151 folds into the S4 RNA-binding domain.

It belongs to the universal ribosomal protein uS4 family. In terms of assembly, part of the 30S ribosomal subunit. Contacts protein S5. The interaction surface between S4 and S5 is involved in control of translational fidelity.

It is found in the plastid. Its subcellular location is the chloroplast. One of the primary rRNA binding proteins, it binds directly to 16S rRNA where it nucleates assembly of the body of the 30S subunit. In terms of biological role, with S5 and S12 plays an important role in translational accuracy. The chain is Small ribosomal subunit protein uS4c (rps4) from Plagiochila adianthoides (Liverwort).